A 350-amino-acid polypeptide reads, in one-letter code: Protein-glutamate methylesterase/protein-glutamine glutaminase 2 (350 aa).

The Response regulatory domain maps to 3–121 (RVLLVDDSPV…DPDYEEAVSE (119 aa)). At Asp54 the chain carries 4-aspartylphosphate. In terms of domain architecture, CheB-type methylesterase spans 158-322 (IHQDIRVIVI…SFVYGMPGAA (165 aa)). Catalysis depends on residues Ser170, His197, and Asp290.

It belongs to the CheB family. Post-translationally, phosphorylated by CheA. Phosphorylation of the N-terminal regulatory domain activates the methylesterase activity.

Its subcellular location is the cytoplasm. The catalysed reaction is [protein]-L-glutamate 5-O-methyl ester + H2O = L-glutamyl-[protein] + methanol + H(+). It carries out the reaction L-glutaminyl-[protein] + H2O = L-glutamyl-[protein] + NH4(+). In terms of biological role, involved in chemotaxis. Part of a chemotaxis signal transduction system that modulates chemotaxis in response to various stimuli. Catalyzes the demethylation of specific methylglutamate residues introduced into the chemoreceptors (methyl-accepting chemotaxis proteins or MCP) by CheR. Also mediates the irreversible deamidation of specific glutamine residues to glutamic acid. This Methanospirillum hungatei JF-1 (strain ATCC 27890 / DSM 864 / NBRC 100397 / JF-1) protein is Protein-glutamate methylesterase/protein-glutamine glutaminase 2.